The chain runs to 116 residues: Holo-[acyl-carrier-protein] synthase (116 aa).

Residues Asp-5 and Glu-50 each coordinate Mg(2+).

The protein belongs to the P-Pant transferase superfamily. AcpS family. The cofactor is Mg(2+).

Its subcellular location is the cytoplasm. The catalysed reaction is apo-[ACP] + CoA = holo-[ACP] + adenosine 3',5'-bisphosphate + H(+). Its function is as follows. Transfers the 4'-phosphopantetheine moiety from coenzyme A to a Ser of acyl-carrier-protein. The protein is Holo-[acyl-carrier-protein] synthase of Campylobacter lari (strain RM2100 / D67 / ATCC BAA-1060).